The primary structure comprises 425 residues: Serine hydroxymethyltransferase (425 aa).

(6S)-5,6,7,8-tetrahydrofolate-binding positions include Leu-122 and 126 to 128 (GHL). Lys-231 carries the post-translational modification N6-(pyridoxal phosphate)lysine. 355-357 (SPF) contacts (6S)-5,6,7,8-tetrahydrofolate.

This sequence belongs to the SHMT family. In terms of assembly, homodimer. The cofactor is pyridoxal 5'-phosphate.

The protein localises to the cytoplasm. The enzyme catalyses (6R)-5,10-methylene-5,6,7,8-tetrahydrofolate + glycine + H2O = (6S)-5,6,7,8-tetrahydrofolate + L-serine. The protein operates within one-carbon metabolism; tetrahydrofolate interconversion. Its pathway is amino-acid biosynthesis; glycine biosynthesis; glycine from L-serine: step 1/1. Catalyzes the reversible interconversion of serine and glycine with tetrahydrofolate (THF) serving as the one-carbon carrier. This reaction serves as the major source of one-carbon groups required for the biosynthesis of purines, thymidylate, methionine, and other important biomolecules. Also exhibits THF-independent aldolase activity toward beta-hydroxyamino acids, producing glycine and aldehydes, via a retro-aldol mechanism. The chain is Serine hydroxymethyltransferase from Rippkaea orientalis (strain PCC 8801 / RF-1) (Cyanothece sp. (strain PCC 8801)).